A 464-amino-acid chain; its full sequence is Siroheme synthase (464 aa).

The segment at 1-203 (MEYLPLFHNL…GQGAEAERLL (203 aa)) is precorrin-2 dehydrogenase /sirohydrochlorin ferrochelatase. Residues 22–23 (EI) and 43–44 (PE) contribute to the NAD(+) site. Residue serine 128 is modified to Phosphoserine. Residues 216–464 (GEVYLVGAGP…AWFEGAQSEV (249 aa)) are uroporphyrinogen-III C-methyltransferase. Residue proline 225 coordinates S-adenosyl-L-methionine. Catalysis depends on aspartate 248, which acts as the Proton acceptor. Lysine 270 functions as the Proton donor in the catalytic mechanism. S-adenosyl-L-methionine-binding positions include 301–303 (GGD), isoleucine 306, 331–332 (TA), methionine 383, and glycine 412.

It in the N-terminal section; belongs to the precorrin-2 dehydrogenase / sirohydrochlorin ferrochelatase family. This sequence in the C-terminal section; belongs to the precorrin methyltransferase family.

It catalyses the reaction uroporphyrinogen III + 2 S-adenosyl-L-methionine = precorrin-2 + 2 S-adenosyl-L-homocysteine + H(+). It carries out the reaction precorrin-2 + NAD(+) = sirohydrochlorin + NADH + 2 H(+). The catalysed reaction is siroheme + 2 H(+) = sirohydrochlorin + Fe(2+). It participates in cofactor biosynthesis; adenosylcobalamin biosynthesis; precorrin-2 from uroporphyrinogen III: step 1/1. The protein operates within cofactor biosynthesis; adenosylcobalamin biosynthesis; sirohydrochlorin from precorrin-2: step 1/1. Its pathway is porphyrin-containing compound metabolism; siroheme biosynthesis; precorrin-2 from uroporphyrinogen III: step 1/1. It functions in the pathway porphyrin-containing compound metabolism; siroheme biosynthesis; siroheme from sirohydrochlorin: step 1/1. It participates in porphyrin-containing compound metabolism; siroheme biosynthesis; sirohydrochlorin from precorrin-2: step 1/1. In terms of biological role, multifunctional enzyme that catalyzes the SAM-dependent methylations of uroporphyrinogen III at position C-2 and C-7 to form precorrin-2 via precorrin-1. Then it catalyzes the NAD-dependent ring dehydrogenation of precorrin-2 to yield sirohydrochlorin. Finally, it catalyzes the ferrochelation of sirohydrochlorin to yield siroheme. This chain is Siroheme synthase, found in Pseudomonas fluorescens (strain ATCC BAA-477 / NRRL B-23932 / Pf-5).